A 361-amino-acid polypeptide reads, in one-letter code: Inner kinetochore subunit CNN1 (361 aa).

The segment at 1 to 22 is disordered; the sequence is MSTPRKAAGNNENTEVSEIRTP. Ser2 carries the phosphoserine; by CDK1 modification. A Phosphothreonine; by CDK1 and MPS1 modification is found at Thr14. Ser17 bears the Phosphoserine; by CDK1 and MPS1 mark. Residues Thr21 and Thr42 each carry the phosphothreonine; by CDK1 modification. Ser50 is modified (phosphoserine; by CDK1 and MPS1). The residue at position 52 (Ser52) is a Phosphoserine; by CDK1. Thr53 is modified (phosphothreonine; by MPS1). Ser55 is modified (phosphoserine; by CDK1). An interacts with the NDC80 complex subunits SPC24 and SPC25 and with the KNL1 complex region spans residues 60–84; it reads NKDPNEVRSFLQDLSQVLARKSQGN. Ser74 is modified (phosphoserine; by CDK1 and MPS1). Residues Thr86 and Thr88 each carry the phosphothreonine; by MPS1 modification. Thr91 carries the phosphothreonine; by CDK1 and MPS1 modification. Positions 103–132 are disordered; it reads EESQPEENELLRSRSEKLTDNNIGNETQPD. The span at 111 to 121 shows a compositional bias: basic and acidic residues; it reads ELLRSRSEKLT. Ser115 is subject to Phosphoserine; by CDK1. Positions 122-132 are enriched in polar residues; that stretch reads DNNIGNETQPD. The residue at position 129 (Thr129) is a Phosphothreonine; by CDK1 and MPS1. Thr134 carries the phosphothreonine; by MPS1 modification. Ser135 carries the post-translational modification Phosphoserine; by MPS1. A Phosphothreonine; by CDK1 and MPS1 modification is found at Thr139. Ser153 carries the phosphoserine; by MPS1 modification. Phosphothreonine; by MPS1 is present on Thr174. Position 177 is a phosphoserine; by CDK1 (Ser177). Thr191 carries the phosphothreonine; by CDK1 modification. Ser192 is subject to Phosphoserine; by CDK1. The disordered stretch occupies residues 193-255; that stretch reads PSIGMDQVDE…SDENLDDIGN (63 aa). Residues 219–254 are compositionally biased toward acidic residues; it reads PLSEDLPSDDKEETEEAENEDYSFENTSDENLDDIG. Ser268 is modified (phosphoserine; by CDK1). Ser269 carries the phosphoserine; by MPS1 and IPL1 modification.

The protein belongs to the CENP-T/CNN1 family. As to quaternary structure, component of the inner kinetochore constitutive centromere-associated network (CCAN) (also known as central kinetochore CTF19 complex in yeast), which is composed of at least AME1, CHL4, CNN1, CTF3, CTF19, IML3, MCM16, MCM21, MCM22, MHF1, MHF2, MIF2, NKP1, NKP2, OKP1 and WIP1. Interacts (via N-terminus) with the outer kinetochore NDC80 complex subunits SPC24 (via C-terminus) and SPC25 (via C-terminus); the interaction is direct and contributes to the correct spatiotemporal organization of the KMN network. Interacts with outer kinetochore MIS12 complex subunit NNF1. Interacts (via N-terminus) with the KNL1 complex. Phosphorylation of the C-terminus by MPS1 kinase regulates interaction with the outer kinetochore Ndc80 complex. Phosphorylation levels rise from S-phase and through metaphase, the protein is thendephosphorylated in anaphase.

It localises to the nucleus. It is found in the chromosome. The protein localises to the centromere. The protein resides in the kinetochore. Component of the kinetochore, a multiprotein complex that assembles on centromeric DNA and attaches chromosomes to spindle microtubules, mediating chromosome segregation and sister chromatid segregation during meiosis and mitosis. Component of the inner kinetochore constitutive centromere-associated network (CCAN), which serves as a structural platform for outer kinetochore assembly. Modulates outer kinetochore KMN network activity by regulating interactions within the network. This is Inner kinetochore subunit CNN1 (CNN1) from Saccharomyces cerevisiae (strain ATCC 204508 / S288c) (Baker's yeast).